The sequence spans 535 residues: MQRIPLWLVRSTHCLILLFQDDVQVRKSCLEPFLFLSPERKREIHQLLVAFNQSLVTPTQDEEKILSDIQRACLQIAEDLKHLNPFTGLLLDLNLYTLWTLLRNYKTKQRSQPVNSTVVSRYAHHVVKYIMQRLVYTTDRLFLTAPTSGIVLPVPLANAIFNLLSHCRKKCTGLWRNYGTEKSVLMGLGKEITLCYQALNESGIVSTTLAAFIKLSFPTISIPNLFKPMFQSCKGNQDNFPDICTQGSVIRRPHQGVFGDTFPIPDPLMREISENSFKKFSTANISTLLQNPKEILEMDPFDPRIGGFPLNKEETATPLKDSSFSNPTFINTGAANTLLPAASVTPALESLFSPTHFPCMSDESIASTSHVPLDNNISLPTLVKTNFPLKRKRQSRNIDPNTPRRPRGRPKGSKTKKRPTCSPALFQSSDIPTDSLHVKCPEMLPTVPQNEFCDSSNIQPCTSSSVLENDNLVPINEAETDDNILATILQDLYDLPAPPVLCSHENQTLEIDNNVDIEDLGLSFPMSLQDFLNDE.

The tract at residues 384-426 is disordered; sequence KTNFPLKRKRQSRNIDPNTPRRPRGRPKGSKTKKRPTCSPALF. Residues 404 to 419 show a composition bias toward basic residues; sequence RRPRGRPKGSKTKKRP.

The protein belongs to the herpesviridae TAF50 family.

Its function is as follows. Transcription activation. Regulates the delayed-early 110 kDa promoter. In Saimiriine herpesvirus 2 (strain 11) (SaHV-2), this protein is Putative transcription activator BRLF1 homolog (50).